The primary structure comprises 223 residues: Octanoyltransferase (223 aa).

A BPL/LPL catalytic domain is found at 30-214 (DLDRDCFLLT…IVADLFGEFT (185 aa)). Substrate-binding positions include 75-82 (RGGEITYH), 144-146 (SIG), and 157-159 (GFA). The active-site Acyl-thioester intermediate is Cys175.

The protein belongs to the LipB family.

It localises to the cytoplasm. The catalysed reaction is octanoyl-[ACP] + L-lysyl-[protein] = N(6)-octanoyl-L-lysyl-[protein] + holo-[ACP] + H(+). Its pathway is protein modification; protein lipoylation via endogenous pathway; protein N(6)-(lipoyl)lysine from octanoyl-[acyl-carrier-protein]: step 1/2. Functionally, catalyzes the transfer of endogenously produced octanoic acid from octanoyl-acyl-carrier-protein onto the lipoyl domains of lipoate-dependent enzymes. Lipoyl-ACP can also act as a substrate although octanoyl-ACP is likely to be the physiological substrate. This Desulfotalea psychrophila (strain LSv54 / DSM 12343) protein is Octanoyltransferase.